Here is a 67-residue protein sequence, read N- to C-terminus: Conotoxin VnMMSK-03 (67 aa).

The first 20 residues, 1 to 20, serve as a signal peptide directing secretion; it reads MMSKLGVVLTICLLPFPLTA. A propeptide spanning residues 21–50 is cleaved from the precursor; the sequence is LPMDGDQPADLPALRTQDFEPERSPWFDPV. 3 cysteine pairs are disulfide-bonded: cysteine 53–cysteine 65, cysteine 54–cysteine 61, and cysteine 58–cysteine 64. A 4-hydroxyproline modification is found at proline 63.

Belongs to the conotoxin M superfamily. In terms of tissue distribution, expressed by the venom duct.

It localises to the secreted. The sequence is that of Conotoxin VnMMSK-03 from Conus ventricosus (Mediterranean cone).